A 251-amino-acid chain; its full sequence is Transmembrane ascorbate-dependent reductase CYB561 (251 aa).

Position 1 is an N-acetylmethionine (methionine 1). Over methionine 1 to tyrosine 16 the chain is Cytoplasmic. A helical membrane pass occupies residues valine 17–leucine 37. The 202-residue stretch at phenylalanine 19–threonine 220 folds into the Cytochrome b561 domain. Residues tyrosine 38–asparagine 51 lie on the Vesicular side of the membrane. Residues alanine 52–tyrosine 72 traverse the membrane as a helical segment. Histidine 53, arginine 73, and lysine 80 together coordinate heme b. At arginine 73–valine 85 the chain is on the cytoplasmic side. L-ascorbate contacts are provided by lysine 80 and lysine 84. Residues leucine 86–phenylalanine 106 traverse the membrane as a helical segment. Residues histidine 87, aspartate 116 to serine 119, and histidine 121 contribute to the heme b site. At aspartate 107–cysteine 124 the chain is on the vesicular side. Residues glycine 125–phenylalanine 145 form a helical membrane-spanning segment. At proline 146 to proline 158 the chain is on the cytoplasmic side. Residue arginine 153 participates in L-ascorbate binding. A helical transmembrane segment spans residues glutamine 159–leucine 179. 2 residues coordinate heme b: histidine 160 and glutamate 181. Topologically, residues lysine 180 to glycine 198 are vesicular. A helical transmembrane segment spans residues valine 199–leucine 219. The Cytoplasmic segment spans residues threonine 220–glutamine 251. A heme b-binding site is contributed by lysine 225. A Phosphoserine modification is found at serine 247.

Heme b is required as a cofactor.

It localises to the cytoplasmic vesicle. The protein localises to the secretory vesicle. The protein resides in the chromaffin granule membrane. The enzyme catalyses monodehydro-L-ascorbate radical(out) + L-ascorbate(in) = monodehydro-L-ascorbate radical(in) + L-ascorbate(out). Transmembrane reductase that uses ascorbate as an electron donor in the cytoplasm and transfers electrons across membranes to reduce monodehydro-L-ascorbate radical in the lumen of secretory vesicles. It is therefore involved the regeneration and homeostasis within secretory vesicles of ascorbate which in turn provides reducing equivalents needed to support the activity of intravesicular enzymes. This chain is Transmembrane ascorbate-dependent reductase CYB561 (CYB561), found in Pongo abelii (Sumatran orangutan).